The chain runs to 470 residues: Uronate isomerase (470 aa).

It belongs to the metallo-dependent hydrolases superfamily. Uronate isomerase family.

It carries out the reaction D-glucuronate = D-fructuronate. The enzyme catalyses aldehydo-D-galacturonate = keto-D-tagaturonate. Its pathway is carbohydrate metabolism; pentose and glucuronate interconversion. The sequence is that of Uronate isomerase from Salmonella newport (strain SL254).